A 70-amino-acid polypeptide reads, in one-letter code: Putative ankyrin repeat protein RC0502 (70 aa).

Residues 9 to 43 (KGRIPIHYATYSKQHEITQILILLQPGSEIDTVDN) form an ANK repeat.

The polypeptide is Putative ankyrin repeat protein RC0502 (Rickettsia conorii (strain ATCC VR-613 / Malish 7)).